The chain runs to 598 residues: F-box/WD repeat-containing protein 8 (598 aa).

An N-acetylmethionine modification is found at Met-1. The segment at 17-93 (LAQAQAPKKR…RSPLAREGAG (77 aa)) is disordered. Positions 29–40 (PEAAERRARRPE) are enriched in basic and acidic residues. The segment covering 61–71 (EGAGRPPAARA) has biased composition (low complexity). Residues Ser-83 and Ser-85 each carry the phosphoserine modification. The 47-residue stretch at 113 to 159 (PFFDIQLPYELAINIFQYLDRKELGRCAQVSKTWKVIAEDEVLWYRL) folds into the F-box domain. WD repeat units lie at residues 201-250 (AVSE…LESE), 259-299 (QPNV…FEHD), 300-340 (ARIQ…AEFE), 341-383 (VPKL…LLYA), 384-429 (HGPP…LKLG), 430-475 (NVLR…SAHQ), 476-513 (LRVSAVQMDDWKIVSGGEEGLVSVWDYRMNQKLWEVYS), and 514-561 (GHPV…AYEF).

As to quaternary structure, component of the Cul7-RING(FBXW8) complex consisting of CUL7, RBX1, SKP1 and FBXW8; within the complex interacts with CUL7 and SKP1. Interacts with GLMN isoform 1. Interacts with OBSL1, CUL1, CUL2, CCT6B, PFDN5, CCT2, CCT3, CCT6A, CCT7, VBP1, CCDC8, ARF1, TRIP13, PDCD5 and GORASP1. Interacts with MAP4K1/HPK1 (when autophosphorylated). Associated component of the 3M complex. Interacts with POUF51 (when phosphorylated on 'Ser-355'). In terms of processing, phosphorylation at Ser-85 by mTORC2 promotes FBXW8 stabilization, allowing its translocation to the cytosol in response to insulin.

The protein resides in the cytoplasm. Its subcellular location is the perinuclear region. The protein localises to the golgi apparatus. Its pathway is protein modification; protein ubiquitination. In terms of biological role, substrate-recognition component of the Cul7-RING(FBXW8) ubiquitin ligase complex, which mediates the ubiquitination and subsequent proteasomal degradation of target proteins. The Cul7-RING(FBXW8) complex mediates ubiquitination and consequent degradation of GORASP1, acting as a component of the ubiquitin ligase pathway that regulates Golgi morphogenesis and dendrite patterning in brain. Mediates ubiquitination and degradation of IRS1 in a mTOR-dependent manner: the Cul7-RING(FBXW8) complex recognizes and binds IRS1 previously phosphorylated by S6 kinase (RPS6KB1 or RPS6KB2). The Cul7-RING(FBXW8) complex also mediates ubiquitination of MAP4K1/HPK1: recognizes and binds autophosphorylated MAP4K1/HPK1, leading to its degradation, thereby affecting cell proliferation and differentiation. The Cul7-RING(FBXW8) complex also mediates ubiquitination of phosphorylated cyclin-D1 (CCND1). The Cul7-RING(FBXW8) complex is however not a major regulator of CCND1 stability during the G1/S transition. Associated component of the 3M complex, suggesting that it mediates some of 3M complex functions. The chain is F-box/WD repeat-containing protein 8 from Homo sapiens (Human).